The chain runs to 108 residues: UPF0060 membrane protein RER_49640 (108 aa).

Helical transmembrane passes span 8–28, 33–53, 62–82, and 87–107; these read LLFV…WQGI, GWIW…VATM, ILAA…VVMD, and DRFD…IMYA.

Belongs to the UPF0060 family.

Its subcellular location is the cell membrane. This chain is UPF0060 membrane protein RER_49640, found in Rhodococcus erythropolis (strain PR4 / NBRC 100887).